Consider the following 732-residue polypeptide: mRNA-binding protein puf3 (732 aa).

The interval 98 to 123 is disordered; it reads PDSLVSTPTAPSANHHGNPFPNGKQS. A compositionally biased stretch (polar residues) spans 100–109; the sequence is SLVSTPTAPS. The PUM-HD domain occupies 376–716; it reads QQSRVLYLFH…HLIMSVERFR (341 aa). Pumilio repeat units follow at residues 396-431, 432-468, 469-504, 505-540, 541-576, 577-611, 612-647, and 655-690; these read DILG…AVFQ, EIAS…ILLS, QIKG…QLIQ, ELDG…FILR, ALRP…IIEE, LLPH…YIFD, LMID…RILN, and ENCS…LLIS.

Belongs to the PUF3 family.

It localises to the mitochondrion outer membrane. The protein resides in the cytoplasm. Functionally, RNA-binding protein involved in post-transcriptional regulation. Predominantly binds to mRNAs encoding mitochondrial proteins and localizes them to the vicinity of mitochondria for translation. Regulates mitochondrial biogenesis, motility and morphology. The sequence is that of mRNA-binding protein puf3 (puf3) from Schizosaccharomyces pombe (strain 972 / ATCC 24843) (Fission yeast).